The chain runs to 375 residues: 5-amino-6-(D-ribitylamino)uracil--L-tyrosine 4-hydroxyphenyl transferase 1 (375 aa).

Positions 50–284 (VTYVVNRNIN…AVSRILFHGH (235 aa)) constitute a Radical SAM core domain. Cysteine 64, cysteine 68, and cysteine 71 together coordinate [4Fe-4S] cluster.

The protein belongs to the radical SAM superfamily. CofH family. In terms of assembly, consists of two subunits, CofG and CofH. Requires [4Fe-4S] cluster as cofactor.

It catalyses the reaction 5-amino-6-(D-ribitylamino)uracil + L-tyrosine + S-adenosyl-L-methionine = 5-amino-5-(4-hydroxybenzyl)-6-(D-ribitylimino)-5,6-dihydrouracil + 2-iminoacetate + 5'-deoxyadenosine + L-methionine + H(+). It functions in the pathway cofactor biosynthesis; coenzyme F0 biosynthesis. In terms of biological role, catalyzes the radical-mediated synthesis of 5-amino-5-(4-hydroxybenzyl)-6-(D-ribitylimino)-5,6-dihydrouracil from 5-amino-6-(D-ribitylamino)uracil and L-tyrosine. The sequence is that of 5-amino-6-(D-ribitylamino)uracil--L-tyrosine 4-hydroxyphenyl transferase 1 from Methanosarcina acetivorans (strain ATCC 35395 / DSM 2834 / JCM 12185 / C2A).